We begin with the raw amino-acid sequence, 351 residues long: Muscleblind-like protein 2a (351 aa).

C3H1-type zinc fingers lie at residues Trp-13–Lys-41, Asn-47–Ala-73, Thr-177–Asp-205, and Asp-213–Ala-239.

This sequence belongs to the muscleblind family. Expressed in fast and slow myotomal muscle, heart, liver, skin, brain and testis.

The protein localises to the nucleus. The protein resides in the cytoplasm. Its function is as follows. Involved in pre-mRNA alternative splicing regulation. RNA-binding protein that binds to 5'ACACCC-3' core sequence. The sequence is that of Muscleblind-like protein 2a (mbnl2a) from Takifugu rubripes (Japanese pufferfish).